The chain runs to 331 residues: MVKSILASVLFAATALAASRMTAPSGAIVVAKSGGDYDTISAAVDALSTTSTETQTIFIEEGSYDEQVYIPALSGKLIVYGQTEDTTTYTSNLVNITHAIALADVDNDDETATLRNYAEGSAIYNLNIANTCGQACHQALAVSAYASEQGYYACQFTGYQDTLLAETGYQVYAGTYIEGAVDFIFGQHARAWFHECDIRVLEGPSSASITANGRSSESDDSYYVIHKSTVAAADGNDVSSGTYYLGRPWSQYARVCFQKTSMTDVINHLGWTEWSTSTPNTENVTFVEYGNTGTGAEGPRANFSSELTEPITISWLLGSDWEDWVDTSYIN.

A signal peptide spans 1-17; that stretch reads MVKSILASVLFAATALA. Residue glutamine 138 coordinates substrate. Aspartate 161 functions as the Proton donor in the catalytic mechanism. Catalysis depends on aspartate 182, which acts as the Nucleophile. Residues arginine 247 and tryptophan 249 each coordinate substrate.

It belongs to the pectinesterase family.

It localises to the secreted. The catalysed reaction is [(1-&gt;4)-alpha-D-galacturonosyl methyl ester](n) + n H2O = [(1-&gt;4)-alpha-D-galacturonosyl](n) + n methanol + n H(+). It functions in the pathway glycan metabolism; pectin degradation; 2-dehydro-3-deoxy-D-gluconate from pectin: step 1/5. Its function is as follows. Involved in maceration and soft-rotting of plant tissue. The protein is Pectinesterase (pme1) of Aspergillus niger.